Consider the following 365-residue polypeptide: MALLLCFVLLCGVVDFARSLSITTPEEMIEKAKGETAYLPCKFTLSPEDQGPLDIEWLISPADNQKVDQVIILYSGDKIYDDYYPDLKGRVHFTSNDLKSGDASINVTNLQLSDIGTYQCKVKKAPGVANKKIHLVVLVKPSGARCYVDGSEEIGSDFKIKCEPKEGSLPLQYEWQKLSDSQKMPTSWLAEMTSSVISVKNASSEYSGTYSCTVRNRVGSDQCLLRLNVVPPSNKAGLIAGAIIGTLLALALIGLIIFCCRKKRREEKYEKEVHHDIREDVPPPKSRTSTARSYIGSNHSSLGSMSPSNMEGYSKTQYNQVPSEDFERTPQSPTLPPAKVAAPNLSRMGAIPVMIPAQSKDGSIV.

An N-terminal signal peptide occupies residues Met1–Ser19. 2 consecutive Ig-like C2-type domains span residues Leu20–His134 and Pro141–Asn228. Over Leu20–Gly237 the chain is Extracellular. Cystine bridges form between Cys41–Cys120 and Cys162–Cys212. Asn106 and Asn201 each carry an N-linked (GlcNAc...) asparagine glycan. The chain crosses the membrane as a helical span at residues Leu238–Phe258. 2 S-palmitoyl cysteine lipidation sites follow: Cys259 and Cys260. The Cytoplasmic portion of the chain corresponds to Cys259 to Val365. Over residues Tyr269–Pro282 the composition is skewed to basic and acidic residues. The segment at Tyr269 to Pro343 is disordered. Positions Ser286–Pro322 are enriched in polar residues. A phosphoserine mark is found at Ser297, Ser304, Ser306, Ser323, Ser332, and Ser363. The short motif at Lys360 to Val365 is the PDZ-binding element.

In terms of assembly, monomer. May form homodimer. Interacts with LNX, MAGI1, DLG4, PRKCABP, TJP1 and CTNNB1. Interacts with MPDZ; recruits MPDZ to intercellular contact sites. Interacts with JAML (homodimeric form). Secreted isoform 3, isoform 4 and isoform 5 can interact with the extracellular domain of the receptor. As to quaternary structure, (Microbial infection) Interacts with adenovirus subgroups A, C, D, E and F fiber proteins as well as coxsackievirus B1, B2, B3, B4, B5 and B6 capsid proteins. In terms of processing, N-glycosylated. Palmitoylated on Cys-259 and/or Cys-260; required for proper localization to the plasma membrane. In terms of tissue distribution, expressed in pancreas, brain, heart, small intestine, testis, prostate and at a lower level in liver and lung. Isoform 5 is ubiquitously expressed. Isoform 3 is expressed in heart, lung and pancreas. In skeletal muscle, isoform 1 is found at the neuromuscular junction and isoform 2 is found in blood vessels. In cardiac muscle, isoform 1 and isoform 2 are found at intercalated disks. In heart expressed in subendothelial layers of the vessel wall but not in the luminal endothelial surface. Expression is elevated in hearts with dilated cardiomyopathy.

The protein resides in the cell membrane. It is found in the basolateral cell membrane. Its subcellular location is the cell junction. The protein localises to the tight junction. It localises to the adherens junction. The protein resides in the secreted. Component of the epithelial apical junction complex that may function as a homophilic cell adhesion molecule and is essential for tight junction integrity. Also involved in transepithelial migration of leukocytes through adhesive interactions with JAML a transmembrane protein of the plasma membrane of leukocytes. The interaction between both receptors also mediates the activation of gamma-delta T-cells, a subpopulation of T-cells residing in epithelia and involved in tissue homeostasis and repair. Upon epithelial CXADR-binding, JAML induces downstream cell signaling events in gamma-delta T-cells through PI3-kinase and MAP kinases. It results in proliferation and production of cytokines and growth factors by T-cells that in turn stimulate epithelial tissues repair. Its function is as follows. (Microbial infection) Acts as a receptor for adenovirus type C. In terms of biological role, (Microbial infection) Acts as a receptor for Coxsackievirus B1 to B6. The protein is Coxsackievirus and adenovirus receptor (CXADR) of Homo sapiens (Human).